Consider the following 229-residue polypeptide: Cytochrome c oxidase subunit 2 (229 aa).

Residues 1–26 lie on the Mitochondrial intermembrane side of the membrane; the sequence is MSTWANLGLQDSASPLMEQLIFFHDH. A helical membrane pass occupies residues 27–48; it reads ALLILVMITVLVGYLMFMLFFN. Residues 49-62 lie on the Mitochondrial matrix side of the membrane; the sequence is SYVNRFLLHGQLIE. A helical membrane pass occupies residues 63–82; that stretch reads MIWTILPAIILLFIAMPSLR. Residues 83 to 229 are Mitochondrial intermembrane-facing; the sequence is LLYLLDEINE…IKWISNSVNS (147 aa). Residues H161, C196, E198, C200, H204, and M207 each coordinate Cu cation. Residue E198 coordinates Mg(2+).

This sequence belongs to the cytochrome c oxidase subunit 2 family. In terms of assembly, component of the cytochrome c oxidase (complex IV, CIV), a multisubunit enzyme composed of a catalytic core of 3 subunits and several supernumerary subunits. The complex exists as a monomer or a dimer and forms supercomplexes (SCs) in the inner mitochondrial membrane with ubiquinol-cytochrome c oxidoreductase (cytochrome b-c1 complex, complex III, CIII). The cofactor is Cu cation.

The protein resides in the mitochondrion inner membrane. It catalyses the reaction 4 Fe(II)-[cytochrome c] + O2 + 8 H(+)(in) = 4 Fe(III)-[cytochrome c] + 2 H2O + 4 H(+)(out). Component of the cytochrome c oxidase, the last enzyme in the mitochondrial electron transport chain which drives oxidative phosphorylation. The respiratory chain contains 3 multisubunit complexes succinate dehydrogenase (complex II, CII), ubiquinol-cytochrome c oxidoreductase (cytochrome b-c1 complex, complex III, CIII) and cytochrome c oxidase (complex IV, CIV), that cooperate to transfer electrons derived from NADH and succinate to molecular oxygen, creating an electrochemical gradient over the inner membrane that drives transmembrane transport and the ATP synthase. Cytochrome c oxidase is the component of the respiratory chain that catalyzes the reduction of oxygen to water. Electrons originating from reduced cytochrome c in the intermembrane space (IMS) are transferred via the dinuclear copper A center (CU(A)) of subunit 2 and heme A of subunit 1 to the active site in subunit 1, a binuclear center (BNC) formed by heme A3 and copper B (CU(B)). The BNC reduces molecular oxygen to 2 water molecules using 4 electrons from cytochrome c in the IMS and 4 protons from the mitochondrial matrix. The polypeptide is Cytochrome c oxidase subunit 2 (mt:CoII) (Drosophila affinis (Fruit fly)).